The primary structure comprises 281 residues: Aspartate/glutamate leucyltransferase (281 aa).

Belongs to the R-transferase family. Bpt subfamily.

It localises to the cytoplasm. It catalyses the reaction N-terminal L-glutamyl-[protein] + L-leucyl-tRNA(Leu) = N-terminal L-leucyl-L-glutamyl-[protein] + tRNA(Leu) + H(+). The enzyme catalyses N-terminal L-aspartyl-[protein] + L-leucyl-tRNA(Leu) = N-terminal L-leucyl-L-aspartyl-[protein] + tRNA(Leu) + H(+). Functionally, functions in the N-end rule pathway of protein degradation where it conjugates Leu from its aminoacyl-tRNA to the N-termini of proteins containing an N-terminal aspartate or glutamate. This Paracoccus denitrificans (strain Pd 1222) protein is Aspartate/glutamate leucyltransferase.